The primary structure comprises 689 residues: UvrABC system protein C (689 aa).

Residues methionine 1–glycine 19 are compositionally biased toward polar residues. The disordered stretch occupies residues methionine 1–valine 59. Acidic residues predominate over residues glutamate 42–valine 59. The region spanning threonine 83–valine 161 is the GIY-YIG domain. One can recognise a UVR domain in the interval arginine 271–isoleucine 306.

The protein belongs to the UvrC family. Interacts with UvrB in an incision complex.

The protein resides in the cytoplasm. Functionally, the UvrABC repair system catalyzes the recognition and processing of DNA lesions. UvrC both incises the 5' and 3' sides of the lesion. The N-terminal half is responsible for the 3' incision and the C-terminal half is responsible for the 5' incision. The protein is UvrABC system protein C of Nitrobacter winogradskyi (strain ATCC 25391 / DSM 10237 / CIP 104748 / NCIMB 11846 / Nb-255).